Here is a 533-residue protein sequence, read N- to C-terminus: Single-strand DNA-binding protein (533 aa).

The segment covering 1-10 (MDLSGNEKSR) has biased composition (basic and acidic residues). 2 disordered regions span residues 1–67 (MDLS…EHGN) and 504–533 (FVRP…VNSF). Over residues 16–42 (NVSSSTISDIQMTNGENLESGSPTRTE) the composition is skewed to polar residues. Low complexity predominate over residues 53 to 63 (VDSSSSLYSGS). Basic and acidic residues predominate over residues 515-525 (SDSRRIYESRP).

Forms heterodimers with the chaperone protein virE1 that prevent virE2 anarchic homopolymerization. Interacts with host VIP1 that mediates its translocation to the host nucleus and host VIP2 that promotes T-DNA integration into the host genome. Forms a complex made of VirE2, host VIP1 and VIP2 and single-stranded DNA (ssDNA). Forms a complex made of virE2 and host proteins VIP1 and VBF.

It localises to the secreted. It is found in the host nucleus. Functionally, involved in DNA transformation; mediates the nuclear uptake of single-stranded DNA copies of the transferred DNA (T-DNA) element. Binds single-stranded but not double-stranded DNA regardless of nucleotide sequence composition. The sequence is that of Single-strand DNA-binding protein (virE2) from Agrobacterium tumefaciens (strain 15955).